A 534-amino-acid chain; its full sequence is DM7 family protein GE17491 (534 aa).

It belongs to the DM7 family.

The chain is DM7 family protein GE17491 from Drosophila yakuba (Fruit fly).